The primary structure comprises 238 residues: Ribosomal RNA small subunit methyltransferase G (238 aa).

Residues G75, L80, 126 to 127 (AE), and R142 each bind S-adenosyl-L-methionine.

This sequence belongs to the methyltransferase superfamily. RNA methyltransferase RsmG family.

It localises to the cytoplasm. Specifically methylates the N7 position of guanine in position 518 of 16S rRNA. This chain is Ribosomal RNA small subunit methyltransferase G, found in Streptomyces avermitilis (strain ATCC 31267 / DSM 46492 / JCM 5070 / NBRC 14893 / NCIMB 12804 / NRRL 8165 / MA-4680).